A 143-amino-acid chain; its full sequence is Glutamate-rich protein 4 (143 aa).

The segment covering leucine 90–glycine 106 has biased composition (acidic residues). The interval leucine 90–isoleucine 143 is disordered. Basic and acidic residues predominate over residues glutamate 107–lysine 116.

This Rattus norvegicus (Rat) protein is Glutamate-rich protein 4 (Erich4).